A 1084-amino-acid chain; its full sequence is Putative tRNA-specific 2-thiouridylase (1084 aa).

3 helical membrane passes run 1–21, 32–52, and 309–329; these read MLIFFFFFFFFKYIYNIFILT, FIISFIFSTLMFFYFCTFYVI, and IITIDAYSNNLILYCFLYLIL. Catalysis depends on Cys538, which acts as the Nucleophile. Cys538 and Cys715 are joined by a disulfide. The active-site Cysteine persulfide intermediate is Cys715.

Belongs to the MnmA/TRMU family.

The protein resides in the plastid. The protein localises to the apicoplast. It is found in the membrane. It carries out the reaction S-sulfanyl-L-cysteinyl-[protein] + uridine(34) in tRNA + AH2 + ATP = 2-thiouridine(34) in tRNA + L-cysteinyl-[protein] + A + AMP + diphosphate + H(+). Catalyzes the 2-thiolation of uridine at the wobble position (U34) of tRNA, leading to the formation of s(2)U34. Required for apicoplast maintenance. This chain is Putative tRNA-specific 2-thiouridylase, found in Plasmodium falciparum (isolate 3D7).